A 142-amino-acid polypeptide reads, in one-letter code: Transcription antitermination protein NusB (142 aa).

The protein belongs to the NusB family.

Functionally, involved in transcription antitermination. Required for transcription of ribosomal RNA (rRNA) genes. Binds specifically to the boxA antiterminator sequence of the ribosomal RNA (rrn) operons. The protein is Transcription antitermination protein NusB of Streptococcus uberis (strain ATCC BAA-854 / 0140J).